The primary structure comprises 412 residues: MTDTNELRKVLHRFRSQQEKAEFSVNLVPSENKLSPLAQLPLRSDYYNRYFFNDALDPGFWQFRGGQDVAEMETELTVDHLSRLARAPHVNERPISGLSAMMIAMAGLGGKPGGTVVSIDAASGGHYATASMARRLGFESATVPVVRGQVDEQRLEQVLCRHEPELIYLDLQNSRHELEVSRVADLVGRHSRQTLLHVDCSHTMGLVLGGALGNPLDAGANTMGGSTHKTFPGPHKGVLFTRTPELHQRMREAQFTMLSSHHFAETLALGLASAEFSHFGPAYAEQVIGNAQLFSKLLASEGFDVATDEDGHTTSTHQIWVKIGDAEQTDRISQSLYDHGIRVNVQVDLPGMPGPVLRLGISELTFVGGREAAVHALAREFSNARAGVRRDGSGSRRVREQCGSPFHFVDYP.

Lysine 229 is subject to N6-(pyridoxal phosphate)lysine.

The protein belongs to the SHMT family. It depends on pyridoxal 5'-phosphate as a cofactor.

It catalyses the reaction uridine-5'-aldehyde + L-threonine = (5'S,6'S)-C-glycyluridine + acetaldehyde. It functions in the pathway antibiotic biosynthesis. Its function is as follows. Transaldolase involved in the biosynthesis of the capuramycin-type nucleoside antibiotic A-102395. Catalyzes the condensation of L-threonine and uridine-5'-aldehyde to form 5'-C-glycyluridine (GlyU). In Amycolatopsis sp, this protein is L-threonine:uridine-5'-aldehyde transaldolase.